A 343-amino-acid polypeptide reads, in one-letter code: Holliday junction branch migration complex subunit RuvB (343 aa).

Positions 1–182 are large ATPase domain (RuvB-L); sequence MRDELLNTPT…FGISNRLDYY (182 aa). ATP-binding positions include I21, R22, G63, K66, T67, T68, 129–131, R172, Y182, and R219; that span reads EDF. T67 contributes to the Mg(2+) binding site. The interval 183–253 is small ATPAse domain (RuvB-S); the sequence is SAELLQRIII…LARKTLAALE (71 aa). A head domain (RuvB-H) region spans residues 256-343; sequence EDGLDDMDKK…DGPLFQKGSS (88 aa). Residues R311 and R316 each coordinate DNA.

Belongs to the RuvB family. In terms of assembly, homohexamer. Forms an RuvA(8)-RuvB(12)-Holliday junction (HJ) complex. HJ DNA is sandwiched between 2 RuvA tetramers; dsDNA enters through RuvA and exits via RuvB. An RuvB hexamer assembles on each DNA strand where it exits the tetramer. Each RuvB hexamer is contacted by two RuvA subunits (via domain III) on 2 adjacent RuvB subunits; this complex drives branch migration. In the full resolvosome a probable DNA-RuvA(4)-RuvB(12)-RuvC(2) complex forms which resolves the HJ.

The protein resides in the cytoplasm. The catalysed reaction is ATP + H2O = ADP + phosphate + H(+). In terms of biological role, the RuvA-RuvB-RuvC complex processes Holliday junction (HJ) DNA during genetic recombination and DNA repair, while the RuvA-RuvB complex plays an important role in the rescue of blocked DNA replication forks via replication fork reversal (RFR). RuvA specifically binds to HJ cruciform DNA, conferring on it an open structure. The RuvB hexamer acts as an ATP-dependent pump, pulling dsDNA into and through the RuvAB complex. RuvB forms 2 homohexamers on either side of HJ DNA bound by 1 or 2 RuvA tetramers; 4 subunits per hexamer contact DNA at a time. Coordinated motions by a converter formed by DNA-disengaged RuvB subunits stimulates ATP hydrolysis and nucleotide exchange. Immobilization of the converter enables RuvB to convert the ATP-contained energy into a lever motion, pulling 2 nucleotides of DNA out of the RuvA tetramer per ATP hydrolyzed, thus driving DNA branch migration. The RuvB motors rotate together with the DNA substrate, which together with the progressing nucleotide cycle form the mechanistic basis for DNA recombination by continuous HJ branch migration. Branch migration allows RuvC to scan DNA until it finds its consensus sequence, where it cleaves and resolves cruciform DNA. This is Holliday junction branch migration complex subunit RuvB from Prosthecochloris aestuarii (strain DSM 271 / SK 413).